The sequence spans 349 residues: MSSFSTTERLAAKLKKPKEVYSYSITDGKVTMDQSQLKYYYLPEETILKAPIDLTKGIENWTQPNEHDTHLDTLLESLSKYERETGSKIDAEIITWRGILTKIMTHPYDQYNEPIVLNITYFDGHYFIEEDWQSKQQGKKAPDEQMKKHIYSGYKFESVALLNEPWFKSSREDIESRFDDIPNGDQFVSVVRTQIGDNKILIGGEVDCVFDPCAKGTSRYGELKTSREVHNAKDGEILERKMNRAWAQSFLLGVKHIIYGYRTGDHKLAAVDYFKTEDLPMYAGASSTWSGTDEINFLNAALTKLKDLPKEDNKLWRLVFDSANKKVDITELDGESFLLKEFVDWRKSM.

E157 serves as a coordination point for a divalent metal cation. E205 provides a ligand contact to substrate. A divalent metal cation-binding residues include D207, E222, and L223. Substrate contacts are provided by K224 and Q248.

The protein belongs to the DXO/Dom3Z family. Interacts with RAT1; the interaction is direct, stabilizes RAT1 protein structure and stimulates its exoribonuclease activity. The interaction also stimulates RAI1 pyrophosphohydrolase activity, probably by recruiting it to mRNA substrates. The cofactor is a divalent metal cation.

It localises to the nucleus. It carries out the reaction a 5'-end NAD(+)-phospho-ribonucleoside in mRNA + H2O = a 5'-end phospho-ribonucleoside in mRNA + NAD(+) + H(+). It catalyses the reaction a 5'-end (N(7)-methyl 5'-triphosphoguanosine)-ribonucleoside-ribonucleotide in mRNA + H2O = a (N(7)-methyl 5'-triphosphoguanosine)-nucleoside + a 5'-end phospho-ribonucleoside in mRNA + H(+). The enzyme catalyses a 5'-end triphospho-ribonucleoside in mRNA + H2O = a 5'-end phospho-ribonucleoside in mRNA + diphosphate + H(+). Functionally, decapping enzyme for NAD-capped RNAs: specifically hydrolyzes the nicotinamide adenine dinucleotide (NAD) cap from a subset of RNAs by removing the entire NAD moiety from the 5'-end of an NAD-capped RNA. The NAD-cap is present at the 5'-end of some RNAs and snoRNAs. In contrast to the canonical 5'-end N7 methylguanosine (m7G) cap, the NAD cap promotes mRNA decay. Also acts as a non-canonical decapping enzyme that removes the entire cap structure of m7G capped or incompletely capped RNAs. Has decapping activity toward incomplete 5'-end m7G cap mRNAs such as unmethylated 5'-end-capped RNA (cap0), while it has no activity toward 2'-O-ribose methylated m7G cap (cap1). Also possesses RNA 5'-pyrophosphohydrolase activity by hydrolyzing the 5'-end triphosphate to release pyrophosphates. Stimulates exoribonuclease activity of Rat1, allowing it to degrade RNAs with stable secondary structure more effectively. The sequence is that of Decapping nuclease RAI1 (RAI1) from Yarrowia lipolytica (strain CLIB 122 / E 150) (Yeast).